The following is a 193-amino-acid chain: Flagellar transcriptional regulator FlhC (193 aa).

Residues cysteine 137, cysteine 140, cysteine 158, and cysteine 161 each coordinate Zn(2+).

This sequence belongs to the FlhC family. Heterohexamer composed of two FlhC and four FlhD subunits. Each FlhC binds a FlhD dimer, forming a heterotrimer, and a hexamer assembles by dimerization of two heterotrimers. It depends on Zn(2+) as a cofactor.

Its subcellular location is the cytoplasm. Functionally, functions in complex with FlhD as a master transcriptional regulator that regulates transcription of several flagellar and non-flagellar operons by binding to their promoter region. Activates expression of class 2 flagellar genes, including fliA, which is a flagellum-specific sigma factor that turns on the class 3 genes. Also regulates genes whose products function in a variety of physiological pathways. The polypeptide is Flagellar transcriptional regulator FlhC (Pectobacterium carotovorum (Erwinia carotovora)).